The following is a 94-amino-acid chain: Small ribosomal subunit protein eS24 (94 aa).

The protein belongs to the eukaryotic ribosomal protein eS24 family.

This chain is Small ribosomal subunit protein eS24, found in Nanoarchaeum equitans (strain Kin4-M).